The sequence spans 130 residues: Small ribosomal subunit protein uS8 (130 aa).

Belongs to the universal ribosomal protein uS8 family. In terms of assembly, part of the 30S ribosomal subunit. Contacts proteins S5 and S12.

Its function is as follows. One of the primary rRNA binding proteins, it binds directly to 16S rRNA central domain where it helps coordinate assembly of the platform of the 30S subunit. The sequence is that of Small ribosomal subunit protein uS8 from Pectobacterium atrosepticum (strain SCRI 1043 / ATCC BAA-672) (Erwinia carotovora subsp. atroseptica).